Consider the following 85-residue polypeptide: Sec-independent protein translocase protein TatA (85 aa).

A helical membrane pass occupies residues 1-21 (MGGISIWQLLIIALIVVLLFG). The tract at residues 43–85 (MSSDEDKKALEDAEAAKSVQTAQTAQPTQQATEKKPESNKEQA) is disordered. Over residues 46–57 (DEDKKALEDAEA) the composition is skewed to basic and acidic residues. Low complexity predominate over residues 58-73 (AKSVQTAQTAQPTQQA). A compositionally biased stretch (basic and acidic residues) spans 74 to 85 (TEKKPESNKEQA).

This sequence belongs to the TatA/E family. In terms of assembly, the Tat system comprises two distinct complexes: a TatABC complex, containing multiple copies of TatA, TatB and TatC subunits, and a separate TatA complex, containing only TatA subunits. Substrates initially bind to the TatABC complex, which probably triggers association of the separate TatA complex to form the active translocon.

It localises to the cell inner membrane. In terms of biological role, part of the twin-arginine translocation (Tat) system that transports large folded proteins containing a characteristic twin-arginine motif in their signal peptide across membranes. TatA could form the protein-conducting channel of the Tat system. This chain is Sec-independent protein translocase protein TatA, found in Shewanella sp. (strain ANA-3).